The chain runs to 518 residues: Glutamate--cysteine ligase (518 aa).

The protein belongs to the glutamate--cysteine ligase type 1 family. Type 1 subfamily.

The enzyme catalyses L-cysteine + L-glutamate + ATP = gamma-L-glutamyl-L-cysteine + ADP + phosphate + H(+). Its pathway is sulfur metabolism; glutathione biosynthesis; glutathione from L-cysteine and L-glutamate: step 1/2. The protein is Glutamate--cysteine ligase of Salmonella agona (strain SL483).